Consider the following 120-residue polypeptide: UPF0102 protein PST_1070 (120 aa).

This sequence belongs to the UPF0102 family.

The polypeptide is UPF0102 protein PST_1070 (Stutzerimonas stutzeri (strain A1501) (Pseudomonas stutzeri)).